The sequence spans 120 residues: Small ribosomal subunit protein uS13 (120 aa).

Residues 93 to 120 (RKGLPVRGQTTKNNARTRKGKKKTVGSK) form a disordered region. A compositionally biased stretch (basic residues) spans 107-120 (ARTRKGKKKTVGSK).

This sequence belongs to the universal ribosomal protein uS13 family. Part of the 30S ribosomal subunit. Forms a loose heterodimer with protein S19. Forms two bridges to the 50S subunit in the 70S ribosome.

In terms of biological role, located at the top of the head of the 30S subunit, it contacts several helices of the 16S rRNA. In the 70S ribosome it contacts the 23S rRNA (bridge B1a) and protein L5 of the 50S subunit (bridge B1b), connecting the 2 subunits; these bridges are implicated in subunit movement. Contacts the tRNAs in the A and P-sites. In Helicobacter pylori (strain P12), this protein is Small ribosomal subunit protein uS13.